Consider the following 249-residue polypeptide: NAD(P)H-quinone oxidoreductase subunit K 2 (249 aa).

Residues C54, C55, C119, and C150 each contribute to the [4Fe-4S] cluster site.

Belongs to the complex I 20 kDa subunit family. NDH-1 can be composed of about 15 different subunits; different subcomplexes with different compositions have been identified which probably have different functions. It depends on [4Fe-4S] cluster as a cofactor.

Its subcellular location is the cell inner membrane. The catalysed reaction is a plastoquinone + NADH + (n+1) H(+)(in) = a plastoquinol + NAD(+) + n H(+)(out). The enzyme catalyses a plastoquinone + NADPH + (n+1) H(+)(in) = a plastoquinol + NADP(+) + n H(+)(out). Functionally, NDH-1 shuttles electrons from an unknown electron donor, via FMN and iron-sulfur (Fe-S) centers, to quinones in the respiratory and/or the photosynthetic chain. The immediate electron acceptor for the enzyme in this species is believed to be plastoquinone. Couples the redox reaction to proton translocation, and thus conserves the redox energy in a proton gradient. Cyanobacterial NDH-1 also plays a role in inorganic carbon-concentration. The protein is NAD(P)H-quinone oxidoreductase subunit K 2 of Gloeobacter violaceus (strain ATCC 29082 / PCC 7421).